Reading from the N-terminus, the 284-residue chain is Pseudouridine-5'-phosphate glycosidase (284 aa).

Residue glutamate 17 is the Proton donor of the active site. Lysine 77 and valine 97 together coordinate substrate. Aspartate 126 contacts Mn(2+). Serine 128 to aspartate 130 is a binding site for substrate. Residue lysine 147 is the Nucleophile of the active site.

Belongs to the pseudouridine-5'-phosphate glycosidase family. As to quaternary structure, homotrimer. Requires Mn(2+) as cofactor.

It carries out the reaction D-ribose 5-phosphate + uracil = psi-UMP + H2O. Functionally, catalyzes the reversible cleavage of pseudouridine 5'-phosphate (PsiMP) to ribose 5-phosphate and uracil. Functions biologically in the cleavage direction, as part of a pseudouridine degradation pathway. This chain is Pseudouridine-5'-phosphate glycosidase, found in Thermotoga neapolitana (strain ATCC 49049 / DSM 4359 / NBRC 107923 / NS-E).